Consider the following 179-residue polypeptide: Ribosome maturation factor RimM (179 aa).

Residues 100–176 (KEEFHLLELI…FLIINPPNGL (77 aa)) enclose the PRC barrel domain.

The protein belongs to the RimM family. In terms of assembly, binds ribosomal protein uS19.

Its subcellular location is the cytoplasm. Functionally, an accessory protein needed during the final step in the assembly of 30S ribosomal subunit, possibly for assembly of the head region. Essential for efficient processing of 16S rRNA. May be needed both before and after RbfA during the maturation of 16S rRNA. It has affinity for free ribosomal 30S subunits but not for 70S ribosomes. The protein is Ribosome maturation factor RimM of Prochlorococcus marinus (strain MIT 9312).